Here is a 439-residue protein sequence, read N- to C-terminus: Glucose-1-phosphate adenylyltransferase (439 aa).

Residues tyrosine 122, glycine 187, 202-203, and serine 220 each bind alpha-D-glucose 1-phosphate; that span reads EK.

Belongs to the bacterial/plant glucose-1-phosphate adenylyltransferase family. In terms of assembly, homotetramer.

The catalysed reaction is alpha-D-glucose 1-phosphate + ATP + H(+) = ADP-alpha-D-glucose + diphosphate. It functions in the pathway glycan biosynthesis; glycogen biosynthesis. In terms of biological role, involved in the biosynthesis of ADP-glucose, a building block required for the elongation reactions to produce glycogen. Catalyzes the reaction between ATP and alpha-D-glucose 1-phosphate (G1P) to produce pyrophosphate and ADP-Glc. This is Glucose-1-phosphate adenylyltransferase from Thiobacillus denitrificans (strain ATCC 25259 / T1).